Reading from the N-terminus, the 846-residue chain is Choline trimethylamine-lyase (846 aa).

The region spanning 60 to 718 (PRHVKLKENF…LLGASANGRR (659 aa)) is the PFL domain. Cysteine 489 (cysteine radical intermediate) is an active-site residue. Glutamate 491 acts as the Proton acceptor in catalysis. Residues 725–846 (DGISPTQGAD…IISRTMLHGF (122 aa)) form the Glycine radical domain. A Glycine radical modification is found at glycine 821.

This sequence belongs to the glycyl radical enzyme (GRE) family. CutC subfamily. Homodimer. In terms of processing, requires the activating protein CutD to generate the key active site glycyl radical on Gly-821 that is involved in catalysis.

It catalyses the reaction choline = trimethylamine + acetaldehyde. The protein operates within amine and polyamine metabolism; choline degradation. Its function is as follows. Glycine radical enzyme that catalyzes the cleavage of a C-N bond in choline, producing trimethylamine (TMA) and acetaldehyde. Is involved in the anaerobic choline utilization pathway that allows D.alaskensis to grow on choline as a source of carbon and energy. Is strictly specific for choline as substrate. The polypeptide is Choline trimethylamine-lyase (Oleidesulfovibrio alaskensis (strain ATCC BAA-1058 / DSM 17464 / G20) (Desulfovibrio alaskensis)).